A 186-amino-acid polypeptide reads, in one-letter code: MVENGSRVVMEARDIRSALERLAREIVEQPVDPNGLALVGIHTGGVFLAKRLETLISKKLKHSIPVGTLDITLYRDDWTRLHTQPVVRATNLPFPMDDRDVVLVDDVLYTGRTIRAALDALIDYGRPKRVQVAALVDRGHRELPICGQFIGIELKTRSDEQVNVLLKEKDGVDRVVIEQAAQARKA.

Positions 101–113 (VVLVDDVLYTGRT) match the PRPP-binding motif.

It belongs to the purine/pyrimidine phosphoribosyltransferase family. PyrR subfamily.

The enzyme catalyses UMP + diphosphate = 5-phospho-alpha-D-ribose 1-diphosphate + uracil. In terms of biological role, regulates the transcription of the pyrimidine nucleotide (pyr) operon in response to exogenous pyrimidines. Its function is as follows. Also displays a weak uracil phosphoribosyltransferase activity which is not physiologically significant. This Syntrophobacter fumaroxidans (strain DSM 10017 / MPOB) protein is Bifunctional protein PyrR.